The primary structure comprises 228 residues: Putative N-acetylmannosamine-6-phosphate 2-epimerase (228 aa).

The protein belongs to the NanE family.

It catalyses the reaction an N-acyl-D-glucosamine 6-phosphate = an N-acyl-D-mannosamine 6-phosphate. It participates in amino-sugar metabolism; N-acetylneuraminate degradation; D-fructose 6-phosphate from N-acetylneuraminate: step 3/5. Its function is as follows. Converts N-acetylmannosamine-6-phosphate (ManNAc-6-P) to N-acetylglucosamine-6-phosphate (GlcNAc-6-P). The protein is Putative N-acetylmannosamine-6-phosphate 2-epimerase of Mycoplasmopsis pulmonis (strain UAB CTIP) (Mycoplasma pulmonis).